A 1513-amino-acid polypeptide reads, in one-letter code: Protein tincar (1513 aa).

Residues 1 to 77 (MGGKHQGSGA…DSGSYLHLNS (77 aa)) are Cytoplasmic-facing. The chain crosses the membrane as a helical span at residues 78–98 (LWSIWYGVMLTLFQGYLAMHG). At 99-120 (AYRFLGCSLIPWKIEPVAELNL) the chain is on the extracellular side. The chain crosses the membrane as a helical span at residues 121-141 (QIVLSGVVFILLPVFFTSAVF). At 142 to 181 (KVGNLANDGIKLATGARERRCTLSPHDGLEEESRGGTLRA) the chain is on the cytoplasmic side. The helical transmembrane segment at 182 to 202 (LWTHGGPTAAFVHIVIALCLL) threads the bilayer. The Extracellular portion of the chain corresponds to 203 to 668 (LPRLLLEARI…VAIFSQPPSA (466 aa)). 3 disordered regions span residues 247–266 (TPFP…HQHG), 354–373 (ERQE…DEGV), and 383–532 (MPDF…SIHR). Low complexity predominate over residues 427–466 (ASSSSSSTTSTTTTTTTSTTTTAATTTSTRGTSTTTTTTT). Residues 478-507 (SAHHHHGKSRKHHKHHNKQRQQQPPRRHHV) show a composition bias toward basic residues. Over residues 523-532 (TTTRDSSIHR) the composition is skewed to basic and acidic residues. Residues 669–689 (EFVNLLCALLVWSVRYPAVFW) form a helical membrane-spanning segment. At 690 to 696 (NTSKAFA) the chain is on the cytoplasmic side. The chain crosses the membrane as a helical span at residues 697–717 (CVFSLQMVVAALDIILGYVGI). At 718–736 (SNLYKLQIYAEAMPVHQPG) the chain is on the extracellular side. Residues 737–757 (LILNAVVTLALYLLSTALVLA) traverse the membrane as a helical segment. At 758–787 (SSMVMYLYGHGRLATRMRDRSIITLKTHQT) the chain is on the cytoplasmic side. The helical transmembrane segment at 788-808 (WIYFAHCASLCFVLALAVVKA) threads the bilayer. The Extracellular portion of the chain corresponds to 809-826 (PLLNDLSATYKNNLHCPT). The helical transmembrane segment at 827–847 (FLAALVGVTHLLLWIVIWLCL) threads the bilayer. Over 848 to 1513 (TIKRRWHFKL…CGLYVTAQLH (666 aa)) the chain is Cytoplasmic. 2 stretches are compositionally biased toward low complexity: residues 879–903 (SSGQ…VNGG) and 1060–1071 (QQQQQQQQQQRQ). Disordered regions lie at residues 879–913 (SSGQ…MSTA), 1045–1090 (EYDE…SGLG), 1115–1155 (ASTS…HSAG), 1173–1214 (EHHH…PHQH), and 1231–1335 (AHIA…DPAA). Pro residues predominate over residues 1122 to 1149 (PPQPSAQAPPPPPPLPIKGAPVPQPPAV). Low complexity-rich tracts occupy residues 1179–1208 (LQHS…LQQQ) and 1255–1285 (TPRS…SGVH). The span at 1286–1296 (SGEERELEVII) shows a compositional bias: basic and acidic residues. The segment covering 1303–1314 (KPPPRPPQPPIQ) has biased composition (pro residues). Residues 1324 to 1335 (MRMSSFNADPAA) are compositionally biased toward polar residues.

As to expression, expression varies in tissues throughout development. At stage 5, expressed in the embryo dorsal region followed by expression in a striped pattern at stage 6. During gastrulation, expressed in ventral region and ventral nerve cord. Also detected in many neurons in the externa sensilla and chordotonal organ. At stage 16, expressed on the surface of the midgut. Additionally, expressed in a subset of cardioblasts (Tin+ subpopulation) during dorsal vessel formation. In third-instar larval tissues, expressed in the eye and antennal disks. In the antennal disks, expressed in the second antennal segments. In the eye disks, strongest expression found in the ocelli, and in the differentiating ommatidial cells. Also expressed in all cells within and in the vicinity of the morphogenetic furrow.

Its subcellular location is the membrane. Its function is as follows. Involved in eye morphogenesis. May be essential for the normal differentiation of ommatidial cells. The chain is Protein tincar (tinc) from Drosophila melanogaster (Fruit fly).